Consider the following 261-residue polypeptide: Transmembrane protein 106A (261 aa).

The tract at residues 1 to 23 is disordered; that stretch reads MGKAVSQLTSRKDEDKPILPDNP. Residues 93–113 traverse the membrane as a helical segment; that stretch reads LFVFLSVAICLLIFSLTIFFL.

It belongs to the TMEM106 family. As to expression, expressed in liver, spleen, lung, kidney, lymph nodes and adipose tissue (at protein level). Expressed by macrophages.

It is found in the cell membrane. Activates macrophages and polarizes them into M1-like macrophages through the activation of the MAPK and NF-kappaB signaling pathway. Upon activation, up-regulates the expression of CD80, CD86, CD69 and MHC II on macrophages, and induces the release of pro-inflammatory cytokines such as TNF, IL1B, IL6, CCL2 and nitric oxide. May play a role in inhibition of proliferation and migration. This chain is Transmembrane protein 106A (Tmem106a), found in Mus musculus (Mouse).